The chain runs to 154 residues: Myoglobin (154 aa).

The 147-residue stretch at 2–148 (GLSDGEWQIV…FRNDIAAKYK (147 aa)) folds into the Globin domain. Position 4 is a phosphoserine (Ser4). His65 contributes to the nitrite binding site. His65 contributes to the O2 binding site. Thr68 carries the phosphothreonine modification. His94 is a binding site for heme b.

It belongs to the globin family. As to quaternary structure, monomeric.

The protein localises to the cytoplasm. The protein resides in the sarcoplasm. It catalyses the reaction Fe(III)-heme b-[protein] + nitric oxide + H2O = Fe(II)-heme b-[protein] + nitrite + 2 H(+). The enzyme catalyses H2O2 + AH2 = A + 2 H2O. Functionally, monomeric heme protein which primary function is to store oxygen and facilitate its diffusion within muscle tissues. Reversibly binds oxygen through a pentacoordinated heme iron and enables its timely and efficient release as needed during periods of heightened demand. Depending on the oxidative conditions of tissues and cells, and in addition to its ability to bind oxygen, it also has a nitrite reductase activity whereby it regulates the production of bioactive nitric oxide. Under stress conditions, like hypoxia and anoxia, it also protects cells against reactive oxygen species thanks to its pseudoperoxidase activity. The polypeptide is Myoglobin (MB) (Lycaon pictus (African wild dog)).